Reading from the N-terminus, the 346-residue chain is Sensor histidine kinase GraS (346 aa).

Helical transmembrane passes span 15 to 35 (MNWI…SLID) and 43 to 63 (LFYI…LTYF). A Histidine kinase domain is found at 126-332 (EFVHDIKTPV…TVRLIFPLQN (207 aa)).

In terms of assembly, interacts with GraX.

Its subcellular location is the cell membrane. It catalyses the reaction ATP + protein L-histidine = ADP + protein N-phospho-L-histidine.. Functionally, member of the two-component regulatory system GraR/GraS involved in resistance against cationic antimicrobial peptides (CAMPs). Functions as a sensor protein kinase which phosphorylates GraR through the auxiliary protein GraX. In turn, GraR up-regulates many genes such as adhesins, exoproteins, transporters, toxins, and proteins involved in cell wall synthesis. Down-regulates the expression of many genes involved in RNA and amino acid synthesis or glycolysis. This is Sensor histidine kinase GraS (graS) from Staphylococcus aureus (strain COL).